A 174-amino-acid chain; its full sequence is Period clock protein (174 aa).

The interval 46-134 (SSEGTGAGTG…GTGTGTGTGT (89 aa)) is disordered. Tandem repeats lie at residues 49–50 (GT), 51–52 (GA), 53–54 (GT), 55–56 (GT), 57–58 (GT), 59–60 (GT), 61–62 (GT), 63–64 (GT), 65–66 (GT), 67–68 (GT), 69–70 (GT), 71–72 (GT), 73–74 (GT), 75–76 (GT), 77–78 (GT), 79–80 (GT), 81–82 (GT), 83–84 (GT), 85–86 (GT), 87–88 (GT), 89–90 (GT), 91–92 (GT), 93–94 (GT), 95–96 (GT), 97–98 (GT), 99–100 (GT), 101–102 (GT), 103–104 (GT), 105–106 (GT), 107–108 (GT), 109–110 (GT), 111–112 (GT), 113–114 (GT), 115–116 (GT), 117–118 (GT), 119–120 (GT), 121–122 (GT), 123–124 (GT), 125–126 (GT), 127–128 (GT), 129–130 (GT), 131–132 (GT), 133–134 (GT), 135–136 (GT), and 137–138 (GT). A 45 X 2 AA tandem repeats of G-[TA] region spans residues 49–138 (GTGAGTGTGT…GTGTGTGTGT (90 aa)). Over residues 50-134 (TGAGTGTGTG…GTGTGTGTGT (85 aa)) the composition is skewed to gly residues.

It is found in the plastid. The protein resides in the chloroplast. The sequence is that of Period clock protein from Acetabularia acetabulum (Mermaid's wine glass).